A 336-amino-acid chain; its full sequence is Protease HtpX homolog (336 aa).

The next 2 membrane-spanning stretches (helical) occupy residues 7 to 24 and 29 to 48; these read AMLL…GFLI and GMMI…YWNA. His-130 is a binding site for Zn(2+). Glu-131 is a catalytic residue. His-134 is a Zn(2+) binding site. 2 helical membrane passes run 145 to 165 and 171 to 191; these read IVAT…FLGG and PFGF…AMIV. Glu-200 is a Zn(2+) binding site. Residues 278 to 287 are compositionally biased toward low complexity; the sequence is QQMAGGTQAA. A disordered region spans residues 278–336; it reads QQMAGGTQAAPRPTPRQAGEQQPSGPWGQAPQAEQPAEPERPKANPWGRNPTGPKGRWS.

This sequence belongs to the peptidase M48B family. Zn(2+) serves as cofactor.

It localises to the cell inner membrane. In Mesorhizobium japonicum (strain LMG 29417 / CECT 9101 / MAFF 303099) (Mesorhizobium loti (strain MAFF 303099)), this protein is Protease HtpX homolog.